A 502-amino-acid polypeptide reads, in one-letter code: Bone morphogenetic protein receptor type-1B (502 aa).

The N-terminal stretch at 1–13 is a signal peptide; sequence MLLRSSGKLNVGT. The interval 1–24 is disordered; sequence MLLRSSGKLNVGTKKEDGESTAPT. The Extracellular portion of the chain corresponds to 14 to 126; sequence KKEDGESTAP…DFVDGPIHHK (113 aa). 5 disulfides stabilise this stretch: Cys32-Cys53, Cys34-Cys38, Cys47-Cys71, Cys81-Cys95, and Cys96-Cys102. A helical membrane pass occupies residues 127–148; the sequence is ALLISVTVCSLLLVLIILFCYF. Residues 149–502 are Cytoplasmic-facing; that stretch reads RYKRQEARPR…KMSESQDIKL (354 aa). Residues 174–203 enclose the GS domain; it reads ESLRDLIEQSQSSGSGSGLPLLVQRTIAKQ. The Protein kinase domain occupies 204 to 494; the sequence is IQMVKQIGKG…LRVKKTLAKM (291 aa). Residues 210 to 218 and Lys231 contribute to the ATP site; that span reads IGKGRYGEV. Asp332 functions as the Proton acceptor in the catalytic mechanism.

It belongs to the protein kinase superfamily. TKL Ser/Thr protein kinase family. TGFB receptor subfamily. As to quaternary structure, interacts with high affinity with GDF5; positively regulates chondrocyte differentiation. Interacts with SCUBE3. Interacts with TSC22D1/TSC-22. Interacts with TGFBR3. It depends on Mg(2+) as a cofactor. Mn(2+) serves as cofactor. In terms of processing, autophosphorylated.

Its subcellular location is the cell membrane. It catalyses the reaction L-threonyl-[receptor-protein] + ATP = O-phospho-L-threonyl-[receptor-protein] + ADP + H(+). It carries out the reaction L-seryl-[receptor-protein] + ATP = O-phospho-L-seryl-[receptor-protein] + ADP + H(+). Functionally, on ligand binding, forms a receptor complex consisting of two type II and two type I transmembrane serine/threonine kinases. Type II receptors phosphorylate and activate type I receptors which autophosphorylate, then bind and activate SMAD transcriptional regulators. Receptor for BMP7/OP-1. Receptor for GDF5. Positively regulates chondrocyte differentiation through GDF5 interaction. This Mus musculus (Mouse) protein is Bone morphogenetic protein receptor type-1B (Bmpr1b).